Here is a 304-residue protein sequence, read N- to C-terminus: Proline dehydrogenase 2 (304 aa).

Position 97 (lysine 97) interacts with substrate. Residue aspartate 131 is part of the active site. Residues methionine 132 and glutamine 160 each contribute to the FAD site. The active site involves arginine 181. Residues 184–186 and 223–224 each bind FAD; these read KGA and TH. Substrate is bound at residue 285–286; sequence RR.

This sequence belongs to the proline dehydrogenase family. FAD serves as cofactor.

The catalysed reaction is L-proline + a quinone = (S)-1-pyrroline-5-carboxylate + a quinol + H(+). Its pathway is amino-acid degradation; L-proline degradation into L-glutamate; L-glutamate from L-proline: step 1/2. Its function is as follows. Converts proline to delta-1-pyrroline-5-carboxylate. The polypeptide is Proline dehydrogenase 2 (Bacillus subtilis subsp. natto).